The primary structure comprises 736 residues: MNYRVPSLKATALAMAALTQALTTWDAAYEKALADLASLTQSEKVGVVSGITWEGGPCVGNTYAPESIAYPSLCLQDGPLGIRFANPVTAFPAGINAGATWDRELLRARGAAMGEEAKGLGVHVQLAPVAGALGKIPSAGRNWEGFTSDPYLSGIAMAETIHGMQGSGVQACAKHYILNEQEHSRETISSNVDDRTMHEVYLWPFYDAVKANVASVMCSYNKINGTWACENEGILDTLLKQELGFRGYVMSDWNAQHSTVASANTGLDMTMPGSDFSQPPGSIYWNENLAEAVANGSVPQARVDDMVTRILAAWYLLEQDQGYPAVAFDSRNGGKASVDVTADHADIARTVARDSIVLLKNSNNTLPLRNPSSIAVVGSDAIVNPDGPNACTDRGCNVGTLAQGWGSGTAEFPYLVAPLDAIQERSSGNGTKVVTSTTDDATAGADAAASADIAIVFISSDSGEGYITVEGHQGDRNNLDPWHGGNDLVKAVAAVNKKTIVVVHSTGPVVLETILAQPNVVAVVWAGIPGQESGNALADVLYGDVSPSGKLPYTIGKSEADYGTTWVANGADDDFPEGLFIDYRHFDKNEIEPRYEFGFGLSYTRFNFSNLAINIDATSGPTSGAVDVGGAADLYDSVGTISATVTNVGGVSGAEVAQLYIGFPSSAPETPPKQLRGFQKLPLAGGADGVAEFELTRRDISYWDVGQQKWVVPEGSFQVYVGASSRDIRLDGSFTV.

The first 21 residues, 1-21, serve as a signal peptide directing secretion; sequence MNYRVPSLKATALAMAALTQA. N224 carries an N-linked (GlcNAc...) asparagine glycan. Residue D252 is part of the active site. 4 N-linked (GlcNAc...) asparagine glycosylation sites follow: N295, N363, N429, and N607.

The protein belongs to the glycosyl hydrolase 3 family.

It localises to the secreted. The enzyme catalyses Hydrolysis of terminal, non-reducing beta-D-glucosyl residues with release of beta-D-glucose.. It functions in the pathway glycan metabolism; cellulose degradation. Functionally, beta-glucosidases are one of a number of cellulolytic enzymes involved in the degradation of cellulosic biomass. Catalyzes the last step releasing glucose from the inhibitory cellobiose. In Aspergillus terreus (strain NIH 2624 / FGSC A1156), this protein is Probable beta-glucosidase L (bglL).